A 61-amino-acid chain; its full sequence is Putative neurotoxin-A (61 aa).

An N-terminal signal peptide occupies residues 1–19 (MKTVCGVFMVLLALTVLLA). 3 disulfide bridges follow: cysteine 31–cysteine 50, cysteine 36–cysteine 55, and cysteine 40–cysteine 57.

The protein belongs to the short scorpion toxin superfamily. Expressed by the venom gland.

It is found in the secreted. The polypeptide is Putative neurotoxin-A (Lychas mucronatus (Chinese swimming scorpion)).